The primary structure comprises 209 residues: Holliday junction branch migration complex subunit RuvA (209 aa).

A domain I region spans residues 1–70 (MFSYLKGEAI…EDGTYLYGFA (70 aa)). Residues 71-149 (SAAARDLFRQ…QWRDQFSLPD (79 aa)) are domain II. Residues 149-153 (DTAAQ) are flexible linker. The domain III stretch occupies residues 154 to 209 (PNAAVHEDLELTLLALGYQETEIRGAIATLSQDSILLQNDNADEWIRRAITLLSQT).

The protein belongs to the RuvA family. As to quaternary structure, homotetramer. Forms an RuvA(8)-RuvB(12)-Holliday junction (HJ) complex. HJ DNA is sandwiched between 2 RuvA tetramers; dsDNA enters through RuvA and exits via RuvB. An RuvB hexamer assembles on each DNA strand where it exits the tetramer. Each RuvB hexamer is contacted by two RuvA subunits (via domain III) on 2 adjacent RuvB subunits; this complex drives branch migration. In the full resolvosome a probable DNA-RuvA(4)-RuvB(12)-RuvC(2) complex forms which resolves the HJ.

It is found in the cytoplasm. In terms of biological role, the RuvA-RuvB-RuvC complex processes Holliday junction (HJ) DNA during genetic recombination and DNA repair, while the RuvA-RuvB complex plays an important role in the rescue of blocked DNA replication forks via replication fork reversal (RFR). RuvA specifically binds to HJ cruciform DNA, conferring on it an open structure. The RuvB hexamer acts as an ATP-dependent pump, pulling dsDNA into and through the RuvAB complex. HJ branch migration allows RuvC to scan DNA until it finds its consensus sequence, where it cleaves and resolves the cruciform DNA. The chain is Holliday junction branch migration complex subunit RuvA from Picosynechococcus sp. (strain ATCC 27264 / PCC 7002 / PR-6) (Agmenellum quadruplicatum).